Reading from the N-terminus, the 380-residue chain is Putative 8-amino-7-oxononanoate synthase (380 aa).

Arg18 contributes to the substrate binding site. 106-107 is a pyridoxal 5'-phosphate binding site; that stretch reads GY. His131 provides a ligand contact to substrate. Pyridoxal 5'-phosphate is bound by residues Ser179, 205–208, and 236–239; these read DEAH and TFGK. At Lys239 the chain carries N6-(pyridoxal phosphate)lysine. Substrate is bound at residue Thr352.

The protein belongs to the class-II pyridoxal-phosphate-dependent aminotransferase family. BioF subfamily. As to quaternary structure, homodimer. The cofactor is pyridoxal 5'-phosphate.

It catalyses the reaction 6-carboxyhexanoyl-[ACP] + L-alanine + H(+) = (8S)-8-amino-7-oxononanoate + holo-[ACP] + CO2. Its pathway is cofactor biosynthesis; biotin biosynthesis. Functionally, catalyzes the decarboxylative condensation of pimeloyl-[acyl-carrier protein] and L-alanine to produce 8-amino-7-oxononanoate (AON), [acyl-carrier protein], and carbon dioxide. This is Putative 8-amino-7-oxononanoate synthase (bioF) from Haemophilus influenzae (strain ATCC 51907 / DSM 11121 / KW20 / Rd).